The sequence spans 406 residues: Enoyl-[acyl-carrier-protein] reductase [NADH] (406 aa).

Residues 48-53 (GASTGF), 74-75 (FE), 111-112 (DA), and 140-141 (IA) contribute to the NAD(+) site. Tyr226 contacts substrate. Tyr236 (proton donor) is an active-site residue. Residues Lys245 and 275–277 (LVT) each bind NAD(+).

Belongs to the TER reductase family. Monomer.

The catalysed reaction is a 2,3-saturated acyl-[ACP] + NAD(+) = a (2E)-enoyl-[ACP] + NADH + H(+). The protein operates within lipid metabolism; fatty acid biosynthesis. In terms of biological role, involved in the final reduction of the elongation cycle of fatty acid synthesis (FAS II). Catalyzes the reduction of a carbon-carbon double bond in an enoyl moiety that is covalently linked to an acyl carrier protein (ACP). The sequence is that of Enoyl-[acyl-carrier-protein] reductase [NADH] from Coxiella burnetii (strain Dugway 5J108-111).